Reading from the N-terminus, the 156-residue chain is Small ribosomal subunit protein uS7 (156 aa).

The protein belongs to the universal ribosomal protein uS7 family. As to quaternary structure, part of the 30S ribosomal subunit. Contacts proteins S9 and S11.

Its function is as follows. One of the primary rRNA binding proteins, it binds directly to 16S rRNA where it nucleates assembly of the head domain of the 30S subunit. Is located at the subunit interface close to the decoding center, probably blocks exit of the E-site tRNA. The polypeptide is Small ribosomal subunit protein uS7 (Desulfovibrio desulfuricans (strain ATCC 27774 / DSM 6949 / MB)).